We begin with the raw amino-acid sequence, 177 residues long: Large ribosomal subunit protein uL6 (177 aa).

This sequence belongs to the universal ribosomal protein uL6 family. In terms of assembly, part of the 50S ribosomal subunit.

Its function is as follows. This protein binds to the 23S rRNA, and is important in its secondary structure. It is located near the subunit interface in the base of the L7/L12 stalk, and near the tRNA binding site of the peptidyltransferase center. This chain is Large ribosomal subunit protein uL6, found in Acidovorax ebreus (strain TPSY) (Diaphorobacter sp. (strain TPSY)).